A 502-amino-acid polypeptide reads, in one-letter code: Probable cytosol aminopeptidase (502 aa).

The Mn(2+) site is built by lysine 269 and aspartate 274. The active site involves lysine 281. Mn(2+) contacts are provided by aspartate 292, aspartate 351, and glutamate 353. The active site involves arginine 355.

Belongs to the peptidase M17 family. Mn(2+) serves as cofactor.

The protein localises to the cytoplasm. The catalysed reaction is Release of an N-terminal amino acid, Xaa-|-Yaa-, in which Xaa is preferably Leu, but may be other amino acids including Pro although not Arg or Lys, and Yaa may be Pro. Amino acid amides and methyl esters are also readily hydrolyzed, but rates on arylamides are exceedingly low.. The enzyme catalyses Release of an N-terminal amino acid, preferentially leucine, but not glutamic or aspartic acids.. In terms of biological role, presumably involved in the processing and regular turnover of intracellular proteins. Catalyzes the removal of unsubstituted N-terminal amino acids from various peptides. The chain is Probable cytosol aminopeptidase from Shewanella denitrificans (strain OS217 / ATCC BAA-1090 / DSM 15013).